The primary structure comprises 315 residues: Methionyl-tRNA formyltransferase (315 aa).

Position 110–113 (110–113 (SLLP)) interacts with (6S)-5,6,7,8-tetrahydrofolate.

The protein belongs to the Fmt family.

It carries out the reaction L-methionyl-tRNA(fMet) + (6R)-10-formyltetrahydrofolate = N-formyl-L-methionyl-tRNA(fMet) + (6S)-5,6,7,8-tetrahydrofolate + H(+). Attaches a formyl group to the free amino group of methionyl-tRNA(fMet). The formyl group appears to play a dual role in the initiator identity of N-formylmethionyl-tRNA by promoting its recognition by IF2 and preventing the misappropriation of this tRNA by the elongation apparatus. This chain is Methionyl-tRNA formyltransferase, found in Mycolicibacterium paratuberculosis (strain ATCC BAA-968 / K-10) (Mycobacterium paratuberculosis).